Reading from the N-terminus, the 117-residue chain is Probable glycerol dehydratase-reactivating factor small subunit (117 aa).

Glu-31 serves as a coordination point for Mg(2+).

The protein belongs to the DdrB/PduH family. As to quaternary structure, member of the GDR complex, probably composed of DhaF(2)/DhaG(2). Requires Mg(2+) as cofactor.

In terms of biological role, small subunit of the glycerol dehydratase-reactivating factor (GDR), which reactivates suicidally inhibited adenosylcobalamin-dependent glycerol dehydratase. The polypeptide is Probable glycerol dehydratase-reactivating factor small subunit (Citrobacter freundii).